The primary structure comprises 525 residues: Endoglucanase 10 (525 aa).

The first 26 residues, 1 to 26, serve as a signal peptide directing secretion; that stretch reads MEEKSKSRGWCGWFIAIIVLASVILA. Residue D109 is the Nucleophile of the active site. N259 carries N-linked (GlcNAc...) asparagine glycosylation. H442 is a catalytic residue. 2 N-linked (GlcNAc...) asparagine glycosylation sites follow: N464 and N484. Catalysis depends on residues D489 and E498.

The protein belongs to the glycosyl hydrolase 9 (cellulase E) family.

Its subcellular location is the secreted. The enzyme catalyses Endohydrolysis of (1-&gt;4)-beta-D-glucosidic linkages in cellulose, lichenin and cereal beta-D-glucans.. The protein is Endoglucanase 10 of Arabidopsis thaliana (Mouse-ear cress).